The sequence spans 454 residues: MNLSNLWQSCLLQLQDQVSASDLSTWLRPLQADVVADNHIVLYASNMFVKGWVETHYLAQIQQICQTLAQNPELRISLKEGVKPAPKIVESTPNTSLRSESAVDFQAESSASVKFESHLNTKHLFDNFVEGKSNQLARAVGQKLAQAPGEPSANPFFLYGGTGLGKTHLLHAIGNGILADKPNARVLYIHANNFMQHMVKAVRDNKMDQFKKFYRSLDALLVDDIQFFAEKEKTQEEFFHIFNSLFETGRQIILTSDRYPKEIEKIEERLKSRFGWGLTTAIEPPDLETRVAILLKKAEEHNMNLPEEVAFFIAQRLRTNVRELEGALNRVKAMQDFKGGDIDIDFVRDTLKDILALQERLVTIENIQKVVAEYYRIKVSDLKSKSRARSVTRPRQIAMALAKELTNRSLPEIGRAFDRDHTTVLNACREVPKFREQDNSIQEDWANLIRTLSA.

The domain I, interacts with DnaA modulators stretch occupies residues 1-80; the sequence is MNLSNLWQSC…NPELRISLKE (80 aa). The interval 80 to 117 is domain II; it reads EGVKPAPKIVESTPNTSLRSESAVDFQAESSASVKFES. The domain III, AAA+ region stretch occupies residues 118–335; the sequence is HLNTKHLFDN…GALNRVKAMQ (218 aa). Positions 163, 165, 166, and 167 each coordinate ATP. A domain IV, binds dsDNA region spans residues 336 to 454; that stretch reads DFKGGDIDID…WANLIRTLSA (119 aa).

Belongs to the DnaA family. Oligomerizes as a right-handed, spiral filament on DNA at oriC.

It is found in the cytoplasm. In terms of biological role, plays an essential role in the initiation and regulation of chromosomal replication. ATP-DnaA binds to the origin of replication (oriC) to initiate formation of the DNA replication initiation complex once per cell cycle. Binds the DnaA box (a 9 base pair repeat at the origin) and separates the double-stranded (ds)DNA. Forms a right-handed helical filament on oriC DNA; dsDNA binds to the exterior of the filament while single-stranded (ss)DNA is stabiized in the filament's interior. The ATP-DnaA-oriC complex binds and stabilizes one strand of the AT-rich DNA unwinding element (DUE), permitting loading of DNA polymerase. After initiation quickly degrades to an ADP-DnaA complex that is not apt for DNA replication. Binds acidic phospholipids. The protein is Chromosomal replication initiator protein DnaA of Haemophilus influenzae (strain ATCC 51907 / DSM 11121 / KW20 / Rd).